We begin with the raw amino-acid sequence, 314 residues long: tRNA pseudouridine synthase B (314 aa).

Residue histidine 43 coordinates substrate. Aspartate 48 (nucleophile) is an active-site residue. The substrate site is built by tyrosine 76, tyrosine 179, and leucine 200.

The protein belongs to the pseudouridine synthase TruB family. Type 1 subfamily.

It carries out the reaction uridine(55) in tRNA = pseudouridine(55) in tRNA. Responsible for synthesis of pseudouridine from uracil-55 in the psi GC loop of transfer RNAs. The protein is tRNA pseudouridine synthase B of Enterobacter sp. (strain 638).